A 492-amino-acid polypeptide reads, in one-letter code: Catalase isozyme 2 (492 aa).

The segment at M1–M32 is disordered. The segment covering P8–M32 has biased composition (polar residues). Residues H65 and N138 contribute to the active site. Y348 is a binding site for heme.

The protein belongs to the catalase family. Homotetramer. The cofactor is heme. Abundant in hypocotyls and roots. Low levels are seen in the endosperms and cotyledons.

Its subcellular location is the peroxisome. It localises to the glyoxysome. The enzyme catalyses 2 H2O2 = O2 + 2 H2O. Occurs in almost all aerobically respiring organisms and serves to protect cells from the toxic effects of hydrogen peroxide. The chain is Catalase isozyme 2 (CAT2) from Ricinus communis (Castor bean).